The following is a 351-amino-acid chain: Uroporphyrinogen decarboxylase (351 aa).

Substrate-binding positions include Arg25–Arg29, Asp74, Tyr151, Ser206, and His325.

It belongs to the uroporphyrinogen decarboxylase family. In terms of assembly, homodimer.

Its subcellular location is the cytoplasm. It catalyses the reaction uroporphyrinogen III + 4 H(+) = coproporphyrinogen III + 4 CO2. It participates in porphyrin-containing compound metabolism; protoporphyrin-IX biosynthesis; coproporphyrinogen-III from 5-aminolevulinate: step 4/4. Catalyzes the decarboxylation of four acetate groups of uroporphyrinogen-III to yield coproporphyrinogen-III. The protein is Uroporphyrinogen decarboxylase of Prosthecochloris aestuarii (strain DSM 271 / SK 413).